Here is a 492-residue protein sequence, read N- to C-terminus: RNA helicase CrhR (492 aa).

The Q motif signature appears at Ser7 to Thr35. The Helicase ATP-binding domain maps to Ile38–Val207. Residue Ser51–Thr58 participates in ATP binding. The DEAD box signature appears at Asp155–Asp158. Residues Lys234–Val379 enclose the Helicase C-terminal domain. Residues Val451 to Gln492 form a disordered region. The segment covering Asn457–Gly471 has biased composition (gly residues).

Belongs to the DEAD box helicase family.

The protein localises to the cytoplasm. The protein resides in the cell inner membrane. It is found in the cellular thylakoid membrane. The catalysed reaction is ATP + H2O = ADP + phosphate + H(+). Helicase inhibited by the slowly-hydrolyzing ATP analog ATP-gamma-S. Protein is rapidly degraded upon shifting from 20 to 30 degrees Celsius, the degradation machinery is only transiently present in cells grown at 30 degrees Celsius, is inhibited by commercial protease inhibitors and requires full-length protein expression (the N-terminal fragment does not induce proteolysis although it can be degraded by wild-type extract). An ATP-dependent bidirectional RNA helicase with RNA-dependent ATPase activity; does not unwind dsDNA, uses only (d)ATP. Also has ATP-dependent RNA annealing activity; concurrent annealing and helicase activity promote strand-exchange activity. In vitro has low helicase processivity, annealing processivity is probably higher. Required for correct cold adaptation, probably by aiding translation of mRNAs required for photosynthesis and electron transport. Probably regulates the cold-shock-inducible expression of the GroESL chaperones. May partially regulate its own expression at both the transcriptional and post-transcriptional level (experiments used a construct expressing a 25 kDa trunacted protein which might have dominant-negative effects); is probably not directly involved in the pathway responsible for mRNA degradation. The sequence is that of RNA helicase CrhR from Synechocystis sp. (strain ATCC 27184 / PCC 6803 / Kazusa).